A 473-amino-acid chain; its full sequence is Azaphilone pigments biosynthesis cluster protein L (473 aa).

The N-terminal stretch at 1 to 23 (MAELSIASGIVGLLSLGIQVTQS) is a signal peptide. ANK repeat units follow at residues 403–432 (EYGN…DVNA) and 436–465 (RYGN…NVST). The N-linked (GlcNAc...) asparagine glycan is linked to Asn462.

Part of the gene cluster that mediates the biosynthesis of azaphilone pigments (MonAzPs), a complex mixture of compounds with a common azaphilone skeleton very widely used as food colorants. Seems not to play a direct role in the biosynthesis but might have a regulatorx function. This is Azaphilone pigments biosynthesis cluster protein L from Monascus ruber (Mold).